The chain runs to 602 residues: Arginine--tRNA ligase (602 aa).

A 'HIGH' region motif is present at residues 132–142 (ANPTGPLHVGH).

Belongs to the class-I aminoacyl-tRNA synthetase family. Monomer.

Its subcellular location is the cytoplasm. The enzyme catalyses tRNA(Arg) + L-arginine + ATP = L-arginyl-tRNA(Arg) + AMP + diphosphate. The sequence is that of Arginine--tRNA ligase from Cupriavidus metallidurans (strain ATCC 43123 / DSM 2839 / NBRC 102507 / CH34) (Ralstonia metallidurans).